Here is a 792-residue protein sequence, read N- to C-terminus: Oxidoreductase cns1 (792 aa).

As to quaternary structure, interacts with cns2.

Its subcellular location is the lipid droplet. The protein operates within secondary metabolite biosynthesis. In terms of biological role, oxidoreductase; part of the gene cluster that mediates the biosynthesis of cordycepin (COR) and pentostatin (PTN), two adenosine analogs with related bioactivity profiles as both mimic adenosine and can inhibit some of the processes that are adenosine dependent. Within the pathway, cns1 catalyzes the last step by converting the cns2 product 2'-carbonyl-3'-deoxyadenosine (2'-C-3'-dA) into cordycepin (3'-deoxyadenosine). The first step of cordycepin biosynthesis involves hydroxyl phosphorylation of the 3'-OH position on adenosine to produce adenosine-3'-monophosphate (3'-AMP), catalyzed by kinase activity of cns3. Next, 3'-AMP is dephosphorylated to 2'-carbonyl-3'-deoxyadenosine by cns2, which is finally converted to cordycepin by the oxidoreductase cns1. Pentostatin production is mediated by the ATP phosphoribosyltransferase activity of cns3 on adenosine to inhibit the activity of adenosine deaminase (ADA) to prevent COR deamination to 3'-deoxyinosine (3'-dI). This chain is Oxidoreductase cns1, found in Cordyceps militaris (strain CM01) (Caterpillar fungus).